The following is a 576-amino-acid chain: Lysine--tRNA ligase (576 aa).

Residues Glu413 and Glu420 each coordinate Mg(2+).

This sequence belongs to the class-II aminoacyl-tRNA synthetase family. In terms of assembly, homodimer. It depends on Mg(2+) as a cofactor.

It is found in the cytoplasm. It catalyses the reaction tRNA(Lys) + L-lysine + ATP = L-lysyl-tRNA(Lys) + AMP + diphosphate. The protein is Lysine--tRNA ligase of Bacteroides thetaiotaomicron (strain ATCC 29148 / DSM 2079 / JCM 5827 / CCUG 10774 / NCTC 10582 / VPI-5482 / E50).